The following is a 125-amino-acid chain: Protein ApaG (125 aa).

The region spanning 1–125 is the ApaG domain; sequence MIEQPRICVQ…FRLAIPALIH (125 aa).

The protein is Protein ApaG of Yersinia pestis bv. Antiqua (strain Antiqua).